A 191-amino-acid chain; its full sequence is Putative RNA-binding protein EEED8.4 (191 aa).

One can recognise an RRM domain in the interval 55–132; the sequence is KSVFIGNVDF…RPIVVTAKRT (78 aa). The segment at 136 to 160 is disordered; that stretch reads GMGHGVRGSSRGTFGRGRGAARGAP.

The polypeptide is Putative RNA-binding protein EEED8.4 (Caenorhabditis elegans).